The chain runs to 705 residues: Polyribonucleotide nucleotidyltransferase (705 aa).

Mg(2+)-binding residues include Asp486 and Asp492. One can recognise a KH domain in the interval 553–612 (PRIHTIRINPDKIKDVIGKGGSVIRALTEETGTTIEIEDDGTVKIAATDGEKAKFAIRRI). Residues 622–690 (GRIYQGKVTR…RQGRVRLSIK (69 aa)) enclose the S1 motif domain.

It belongs to the polyribonucleotide nucleotidyltransferase family. Component of the RNA degradosome, which is a multiprotein complex involved in RNA processing and mRNA degradation. Mg(2+) is required as a cofactor.

It localises to the cytoplasm. It catalyses the reaction RNA(n+1) + phosphate = RNA(n) + a ribonucleoside 5'-diphosphate. Involved in mRNA degradation. Catalyzes the phosphorolysis of single-stranded polyribonucleotides processively in the 3'- to 5'-direction. The sequence is that of Polyribonucleotide nucleotidyltransferase from Serratia proteamaculans (strain 568).